The primary structure comprises 778 residues: Putative ATP-dependent RNA helicase MJ1505 (778 aa).

The region spanning 22 to 186 (IAANALKKKT…EICENLGIEH (165 aa)) is the Helicase ATP-binding domain. Residue 35–42 (LSTGLGKT) participates in ATP binding. Positions 137 to 140 (DEAH) match the DEAH box motif. The region spanning 338 to 516 (KVVDMVKNIL…EIKEETEEIK (179 aa)) is the Helicase C-terminal domain.

Belongs to the DEAD box helicase family. DEAH subfamily.

It carries out the reaction ATP + H2O = ADP + phosphate + H(+). The sequence is that of Putative ATP-dependent RNA helicase MJ1505 from Methanocaldococcus jannaschii (strain ATCC 43067 / DSM 2661 / JAL-1 / JCM 10045 / NBRC 100440) (Methanococcus jannaschii).